A 156-amino-acid chain; its full sequence is Cytochrome c-type biogenesis protein CcmE (156 aa).

Residues 1 to 8 (MNPLRRKR) are Cytoplasmic-facing. A helical; Signal-anchor for type II membrane protein membrane pass occupies residues 9-29 (LLIILAILAGVGIAVGLAMSA). At 30–156 (LRENINLFYT…RIRSLPRRAK (127 aa)) the chain is on the periplasmic side. 2 residues coordinate heme: histidine 124 and tyrosine 128.

The protein belongs to the CcmE/CycJ family.

It localises to the cell inner membrane. Heme chaperone required for the biogenesis of c-type cytochromes. Transiently binds heme delivered by CcmC and transfers the heme to apo-cytochromes in a process facilitated by CcmF and CcmH. This Pseudomonas fluorescens protein is Cytochrome c-type biogenesis protein CcmE.